Reading from the N-terminus, the 343-residue chain is Melanoma-associated antigen B18 (343 aa).

Residues 1-17 are compositionally biased toward basic residues; sequence MPRGQKSKLRAREKRHQ. The segment at 1–102 is disordered; the sequence is MPRGQKSKLR…LGSSREAEGW (102 aa). The span at 67–87 shows a compositional bias: polar residues; that stretch reads APSTTNAIAPVSCSSNEGASS. Basic and acidic residues predominate over residues 88–102; sequence QDEKSLGSSREAEGW. Positions 100–343 are interaction with LNX1; sequence EGWKEDPLNK…TTSSSFSHAK (244 aa). In terms of domain architecture, MAGE spans 107–306; that stretch reads LNKKVVSLVH…SAFPSCYEEA (200 aa). The disordered stretch occupies residues 313–343; that stretch reads RTQARAAARAHTAAMANARSRTTSSSFSHAK. Residues 316–333 are compositionally biased toward low complexity; it reads ARAAARAHTAAMANARSR. The segment covering 334 to 343 has biased composition (polar residues); that stretch reads TTSSSFSHAK.

Interacts with LNX1.

The protein localises to the cytoplasm. Functionally, may enhance ubiquitin ligase activity of RING-type zinc finger-containing E3 ubiquitin-protein ligases. Proposed to act through recruitment and/or stabilization of the Ubl-conjugating enzyme (E2) at the E3:substrate complex. In Homo sapiens (Human), this protein is Melanoma-associated antigen B18 (MAGEB18).